We begin with the raw amino-acid sequence, 331 residues long: Lipoyl synthase (331 aa).

[4Fe-4S] cluster contacts are provided by Cys57, Cys62, Cys68, Cys83, Cys87, Cys90, and Ser294. Residues 69–283 (WEDREATFLI…KAEAEAIGFL (215 aa)) enclose the Radical SAM core domain.

It belongs to the radical SAM superfamily. Lipoyl synthase family. The cofactor is [4Fe-4S] cluster.

The protein localises to the cytoplasm. The catalysed reaction is [[Fe-S] cluster scaffold protein carrying a second [4Fe-4S](2+) cluster] + N(6)-octanoyl-L-lysyl-[protein] + 2 oxidized [2Fe-2S]-[ferredoxin] + 2 S-adenosyl-L-methionine + 4 H(+) = [[Fe-S] cluster scaffold protein] + N(6)-[(R)-dihydrolipoyl]-L-lysyl-[protein] + 4 Fe(3+) + 2 hydrogen sulfide + 2 5'-deoxyadenosine + 2 L-methionine + 2 reduced [2Fe-2S]-[ferredoxin]. It participates in protein modification; protein lipoylation via endogenous pathway; protein N(6)-(lipoyl)lysine from octanoyl-[acyl-carrier-protein]: step 2/2. Its function is as follows. Catalyzes the radical-mediated insertion of two sulfur atoms into the C-6 and C-8 positions of the octanoyl moiety bound to the lipoyl domains of lipoate-dependent enzymes, thereby converting the octanoylated domains into lipoylated derivatives. The protein is Lipoyl synthase of Clavibacter michiganensis subsp. michiganensis (strain NCPPB 382).